The sequence spans 376 residues: Lipid-A-disaccharide synthase (376 aa).

This sequence belongs to the LpxB family.

The enzyme catalyses a lipid X + a UDP-2-N,3-O-bis[(3R)-3-hydroxyacyl]-alpha-D-glucosamine = a lipid A disaccharide + UDP + H(+). Its pathway is bacterial outer membrane biogenesis; LPS lipid A biosynthesis. Condensation of UDP-2,3-diacylglucosamine and 2,3-diacylglucosamine-1-phosphate to form lipid A disaccharide, a precursor of lipid A, a phosphorylated glycolipid that anchors the lipopolysaccharide to the outer membrane of the cell. This chain is Lipid-A-disaccharide synthase, found in Pseudomonas fluorescens (strain Pf0-1).